Here is a 407-residue protein sequence, read N- to C-terminus: Membrane protein MosC (407 aa).

Positions 1 to 24 are disordered; the sequence is MTRTSPRHHAPSETKRRVPMGGVH. Helical transmembrane passes span 31–51, 69–89, 109–129, 157–177, 186–206, 225–245, 255–275, 290–310, 316–336, 347–367, and 377–397; these read LTIT…AAWA, GVLL…AGYF, ALVL…IVLF, AFLH…FGVI, SVTL…HLLD, LLMF…IAEW, QVTD…MIAG, ALIA…LFMP, LAGF…IFSE, VGLT…PPII, and GRAL…SVFF.

It is found in the cell membrane. May be a membrane transport protein that could either transport a precursor for rhizopine biosynthesis into bacteroids or the finished product from the bacteroids. In Rhizobium meliloti (Ensifer meliloti), this protein is Membrane protein MosC (mosC).